Reading from the N-terminus, the 268-residue chain is Small ribosomal subunit protein uS3 (268 aa).

The KH type-2 domain maps to 38–106 (IRKLLATGME…QVQLNILEVK (69 aa)). Positions 218–268 (VAAPAGDRPRRERPSRPRRSGATGTTATSTEAGRAATATADAPATTEQKEG) are disordered. The span at 237–268 (SGATGTTATSTEAGRAATATADAPATTEQKEG) shows a compositional bias: low complexity.

The protein belongs to the universal ribosomal protein uS3 family. Part of the 30S ribosomal subunit. Forms a tight complex with proteins S10 and S14.

Its function is as follows. Binds the lower part of the 30S subunit head. Binds mRNA in the 70S ribosome, positioning it for translation. The protein is Small ribosomal subunit protein uS3 of Rhodococcus jostii (strain RHA1).